Reading from the N-terminus, the 142-residue chain is Large ribosomal subunit protein uL11 (142 aa).

The protein belongs to the universal ribosomal protein uL11 family. Part of the ribosomal stalk of the 50S ribosomal subunit. Interacts with L10 and the large rRNA to form the base of the stalk. L10 forms an elongated spine to which L12 dimers bind in a sequential fashion forming a multimeric L10(L12)X complex. One or more lysine residues are methylated.

Functionally, forms part of the ribosomal stalk which helps the ribosome interact with GTP-bound translation factors. In Colwellia psychrerythraea (strain 34H / ATCC BAA-681) (Vibrio psychroerythus), this protein is Large ribosomal subunit protein uL11.